An 88-amino-acid chain; its full sequence is Small ribosomal subunit protein uS15c (88 aa).

The protein belongs to the universal ribosomal protein uS15 family. In terms of assembly, part of the 30S ribosomal subunit.

The protein resides in the plastid. It is found in the chloroplast. The sequence is that of Small ribosomal subunit protein uS15c (rps15) from Crucihimalaya wallichii (Rock-cress).